A 448-amino-acid polypeptide reads, in one-letter code: Keratin, type I cytoskeletal 27 (448 aa).

A head region spans residues 1–73 (MSVRFSSASR…ANEHGLLSGN (73 aa)). The interval 74-109 (EKVTMQNLNDRLASYLENVQALEEANADLEQKIKDW) is coil 1A. Positions 74-389 (EKVTMQNLND…RLIDGDEGSC (316 aa)) constitute an IF rod domain. The interval 110-131 (YEKFGPGSCRGLDHDYSRYFPI) is linker 1. The coil 1B stretch occupies residues 132–223 (IDDLRTQIIS…KNHEEEMQAL (92 aa)). The interval 224 to 246 (QCAAGGNVNVEMNAAPGVDLTVL) is linker 12. The coil 2 stretch occupies residues 247 to 385 (LNNMRAEYEA…ETYCRLIDGD (139 aa)). A tail region spans residues 386-448 (EGSCVKAKGQ…VNKTEQRIPS (63 aa)). Residues 427 to 448 (SRVHTLEEKSTKVNKTEQRIPS) are disordered. A compositionally biased stretch (basic and acidic residues) spans 430 to 448 (HTLEEKSTKVNKTEQRIPS).

Belongs to the intermediate filament family. As to quaternary structure, heterotetramer of two type I and two type II keratins. Interacts with KRT6A to form filaments. Expressed in skin. Expressed in the Henle layer and cuticle of the irs in hair follicle bulb. In the hair follicle, expression was observed in all layers of the irs but was stronger in the Henle layer and cuticle than the Huxley layer until the Henle layer differentiated (at protein level).

It localises to the cytoplasm. Its function is as follows. Essential for the proper assembly of type I and type II keratin protein complexes and formation of keratin intermediate filaments in the inner root sheath (irs). This is Keratin, type I cytoskeletal 27 from Mus musculus (Mouse).